Here is a 417-residue protein sequence, read N- to C-terminus: MKFVIESLTKNSGRLGRLHIKDGAPGQRTPLLMQTTKGGSIPYLSADVFESHVTETPQLLELTLSTIDHMSEALAQFNSADRGLSDYIGFPGHLNVLLLRDPCETTPAGGNDRDIQPLFTRRGKESLSPKRYMEMVASLRPDIYQGLCDADTNAESAKKRVQKSVDRTEKFMHYIYEHKSKVDSTLLAPIVGGYNTFARTQSIKHALEQPSGSYGGYVFEGFHTNGLSATILDASKLLPIVEHCVGQLEEEKPRMVPGAYTPLTTLELIGLGMDLFDTSYAYCAAVNFKALTFTFVQDEVVHVPFLDITDDAIKEDFSPLLKNCVCLSCQKHTRAYVHHLYKTNELLGPILLMVHNLHHYMAFFEAIRESIARDGLPQLTELVRRQNGDSQVDYSIAPNRKVISKATMGKGFAAAAV.

Zn(2+) is bound by residues Cys-324, Cys-326, Cys-329, and His-355.

It belongs to the queuine tRNA-ribosyltransferase family. QTRT2 subfamily. As to quaternary structure, heterodimer of a catalytic subunit and an accessory subunit. Requires Zn(2+) as cofactor.

Its subcellular location is the cytoplasm. Its function is as follows. Non-catalytic subunit of the queuine tRNA-ribosyltransferase (TGT) that catalyzes the base-exchange of a guanine (G) residue with queuine (Q) at position 34 (anticodon wobble position) in tRNAs with GU(N) anticodons (tRNA-Asp, -Asn, -His and -Tyr), resulting in the hypermodified nucleoside queuosine (7-(((4,5-cis-dihydroxy-2-cyclopenten-1-yl)amino)methyl)-7-deazaguanosine). This chain is Queuine tRNA-ribosyltransferase accessory subunit 2, found in Drosophila persimilis (Fruit fly).